Reading from the N-terminus, the 245-residue chain is 8-amino-3,8-dideoxy-manno-octulosonate cytidylyltransferase (245 aa).

Belongs to the KdsB family.

Its subcellular location is the cytoplasm. The enzyme catalyses 8-amino-3,8-dideoxy-alpha-D-manno-octulosonate + CTP = CMP-8-amino-3,8-dideoxy-alpha-D-manno-oct-2-ulosonate + diphosphate. It participates in bacterial outer membrane biogenesis; lipopolysaccharide biosynthesis. Its function is as follows. Activates KDO8N (a required 8-carbon sugar) for incorporation into bacterial lipopolysaccharide in the Shewanella genus. This is 8-amino-3,8-dideoxy-manno-octulosonate cytidylyltransferase from Shewanella baltica (strain OS223).